A 618-amino-acid chain; its full sequence is F-box/LRR-repeat protein At3g58940 (618 aa).

Residues 1-47 (MDRVSNLPEEVRCHILSFLPTKHAALTSVLSKSWLNLWKFETNLDID) form the F-box domain. 6 LRR repeats span residues 147–176 (LKLR…NIDS), 196–223 (EVHM…SIHG), 224–249 (TGVE…NYSD), 282–313 (TLYL…GLKS), 314–339 (DEGR…IIEG), and 354–379 (CISR…GFRG). The interval 587 to 618 (ATDSERAETSSNQEMTELGQATATYFPPREGE) is disordered. The span at 595–609 (TSSNQEMTELGQATA) shows a compositional bias: polar residues.

The protein is F-box/LRR-repeat protein At3g58940 of Arabidopsis thaliana (Mouse-ear cress).